The primary structure comprises 214 residues: Large ribosomal subunit protein uL16 (214 aa).

The protein belongs to the universal ribosomal protein uL16 family. Component of the large ribosomal subunit. Mature ribosomes consist of a small (40S) and a large (60S) subunit. The 40S subunit contains about 33 different proteins and 1 molecule of RNA (18S). The 60S subunit contains about 49 different proteins and 3 molecules of RNA (28S, 5.8S and 5S).

The protein is Large ribosomal subunit protein uL16 (rpl-10L) of Caenorhabditis elegans.